A 179-amino-acid polypeptide reads, in one-letter code: Sodium/potassium-transporting ATPase subunit beta-1-interacting protein 3 (179 aa).

Helical transmembrane passes span 5–22 (TGRCTLVFICTLQMLVAL), 35–55 (APILGNFLHIIVVILGLFGTI), 62–82 (IVAYTIWTAFWVAWNVFIICF), and 151–171 (AVQILLSLIGFVYACYVISVI).

This sequence belongs to the NKAIN family. Interacts with atp1b1 C-terminus.

Its subcellular location is the cell membrane. The protein is Sodium/potassium-transporting ATPase subunit beta-1-interacting protein 3 (nkain3) of Xenopus laevis (African clawed frog).